The chain runs to 1336 residues: Cytokinesis protein sepH (1336 aa).

Over residues 1-10 the composition is skewed to low complexity; the sequence is MVSRSSETSE. Positions 1 to 46 are disordered; that stretch reads MVSRSSETSEGPPPPSKIPGTPAKTRLSRLNSSPAKQDKPKDDRVV. The span at 36–46 shows a compositional bias: basic and acidic residues; the sequence is KQDKPKDDRVV. The Protein kinase domain maps to 59 to 309; that stretch reads YQLGDCLGKG…ARKLLKHPWI (251 aa). Residues 65–73 and K88 each bind ATP; that span reads LGKGAFGSV. D181 serves as the catalytic Proton acceptor. A disordered region spans residues 368 to 402; that stretch reads SRYTPTKDILPSPVSKHVTDRFRSPDSTEEDNWDD. Over residues 384-393 the composition is skewed to basic and acidic residues; it reads HVTDRFRSPD. The stretch at 654-682 forms a coiled coil; sequence AQLEEGLDEVDLEANIARDKYARLRGQVE. Residues 1194 to 1205 are compositionally biased toward basic and acidic residues; the sequence is ERSESFSLEKRK. The tract at residues 1194–1336 is disordered; that stretch reads ERSESFSLEK…PTHADSDWAS (143 aa). Residues 1213–1236 are compositionally biased toward polar residues; that stretch reads TSTTPPGYLANQSAPATPQINRFN. Low complexity-rich tracts occupy residues 1253–1264 and 1272–1285; these read PSLSSSALALRP and PSLSAGLSSSAGPS. A compositionally biased stretch (basic residues) spans 1315 to 1327; the sequence is SRRRSILPQRRRP.

This sequence belongs to the protein kinase superfamily. Ser/Thr protein kinase family. CDC7 subfamily. Requires Mg(2+) as cofactor.

The catalysed reaction is L-seryl-[protein] + ATP = O-phospho-L-seryl-[protein] + ADP + H(+). It carries out the reaction L-threonyl-[protein] + ATP = O-phospho-L-threonyl-[protein] + ADP + H(+). Required for early events during cytokinesis including localization of cytoskeletal components to the cytokinetic ring. The sequence is that of Cytokinesis protein sepH from Aspergillus niger (strain ATCC MYA-4892 / CBS 513.88 / FGSC A1513).